Consider the following 1893-residue polypeptide: Nestin (1893 aa).

Residue Met1 is modified to N-acetylmethionine. Residues 1–7 (MEGCVGE) form a head region. Residues 8–43 (ESFQMWELNRRLEAYLTRVKTLEEQNQLLSAELGGL) are coil 1A. One can recognise an IF rod domain in the interval 8 to 314 (ESFQMWELNR…TLLEAENSRL (307 aa)). Residues 44-55 (RAQSGDTSWRAR) form a linker 1 region. The segment at 56–151 (ADDELASLRI…AAHEEERAHL (96 aa)) is coil 1B. Residues 150–172 (HLNAQAACAPRRPPAPPHGSPVR) form a disordered region. The segment at 152-174 (NAQAACAPRRPPAPPHGSPVRAP) is linker 12. Positions 175-193 (EVEDLARRLGEVWRGAVRD) are coil 2A. The tract at residues 194-196 (YQE) is linker 2. The interval 197–314 (RVAHMESSLG…TLLEAENSRL (118 aa)) is coil 2B. Ser312 bears the Phosphoserine mark. The tail stretch occupies residues 315-1893 (QTPGRGSQAS…DGDSWSSGED (1579 aa)). Thr316 carries the phosphothreonine modification. 2 positions are modified to phosphoserine: Ser356 and Ser359. At Thr389 the chain carries Phosphothreonine. Disordered regions lie at residues 437 to 479 (PELE…SGSR), 507 to 529 (NSSA…SQGP), and 556 to 879 (KENC…NQKS). Residues 507 to 517 (NSSAQKTQESG) are compositionally biased toward polar residues. Ser562 carries the phosphoserine modification. Basic and acidic residues-rich tracts occupy residues 572-595 (GPEK…EKTL) and 606-615 (LGKEDTRTED). Position 620 is a phosphoserine (Ser620). 2 stretches are compositionally biased toward basic and acidic residues: residues 634 to 646 (ESQE…KEGN) and 670 to 681 (MLERLVEKEDQS). Residues Ser685 and Ser729 each carry the phosphoserine modification. 4 stretches are compositionally biased toward basic and acidic residues: residues 717-730 (RLIE…LRSP), 761-774 (RLIE…LRSA), 802-818 (ILER…LRSP), and 846-879 (MLER…NQKS). The residue at position 817 (Ser817) is a Phosphoserine. Ser903 carries the post-translational modification Phosphoserine. Composition is skewed to basic and acidic residues over residues 949-966 (LLED…DRNG) and 989-1051 (QRIV…KSLE). A disordered region spans residues 949–1130 (LLEDKTHKSL…ARSLGKENQE (182 aa)). Residues Ser1005 and Ser1049 each carry the phosphoserine modification. Lys1136 participates in a covalent cross-link: Glycyl lysine isopeptide (Lys-Gly) (interchain with G-Cter in SUMO1); alternate. Lys1136 participates in a covalent cross-link: Glycyl lysine isopeptide (Lys-Gly) (interchain with G-Cter in SUMO2); alternate. Residues Ser1145 and Ser1166 each carry the phosphoserine modification. The interval 1155 to 1222 (ETAEEDLERR…ELSSLGKWNV (68 aa)) is disordered. Basic and acidic residues predominate over residues 1198–1212 (DENRETLTSLEKESQ). Phosphoserine is present on residues Ser1216 and Ser1229. The tract at residues 1237-1263 (EGLQEEQHQESLREVKQELPSSGNQQR) is disordered. A compositionally biased stretch (basic and acidic residues) spans 1241 to 1253 (EEQHQESLREVKQ). The residue at position 1322 (Ser1322) is a Phosphoserine. Disordered regions lie at residues 1336–1369 (DNLE…EQDS) and 1388–1824 (EVVG…SEQV). 2 stretches are compositionally biased toward basic and acidic residues: residues 1354-1363 (VTERDEDRAQ) and 1393-1403 (EDPRHFAREEA). Composition is skewed to acidic residues over residues 1458–1469 (ESMEGWEEEEAS) and 1561–1576 (QDWE…DDLG). Phosphoserine is present on residues Ser1570, Ser1594, Ser1686, Ser1695, Ser1772, and Ser1774. The segment covering 1688 to 1709 (GFADEEESGEEGEEEDADEEGA) has biased composition (acidic residues). Over residues 1773–1788 (GSEESESASLEGEEGQ) the composition is skewed to acidic residues. Over residues 1815–1824 (QSPNLDSEQV) the composition is skewed to polar residues. Residues Ser1866, Ser1889, and Ser1890 each carry the phosphoserine modification. A disordered region spans residues 1870–1893 (LGPSQPLKFTLSGVDGDSWSSGED).

It belongs to the intermediate filament family. As to quaternary structure, forms homodimers and homotetramers in vitro. In mixtures with other intermediate filament proteins such as vimentin and alpha-internexin, this protein preferentially forms heterodimers which can assemble to form intermediate filaments if nestin does not exceed 25%. Interacts with FHOD3. Post-translationally, constitutively phosphorylated. This increases during mitosis when the cytoplasmic intermediate filament network is reorganized. As to expression, CNS stem cells.

Required for brain and eye development. Promotes the disassembly of phosphorylated vimentin intermediate filaments (IF) during mitosis and may play a role in the trafficking and distribution of IF proteins and other cellular factors to daughter cells during progenitor cell division. Required for survival, renewal and mitogen-stimulated proliferation of neural progenitor cells. This chain is Nestin (Nes), found in Rattus norvegicus (Rat).